We begin with the raw amino-acid sequence, 248 residues long: Probable transcriptional regulatory protein Noc_0137 (248 aa).

It belongs to the TACO1 family.

It is found in the cytoplasm. The chain is Probable transcriptional regulatory protein Noc_0137 from Nitrosococcus oceani (strain ATCC 19707 / BCRC 17464 / JCM 30415 / NCIMB 11848 / C-107).